Reading from the N-terminus, the 431-residue chain is MKNLVEELKWRGLYHDSMPGTEEQLLKEVTSAYIGFDPTADSLHIGSMVQIILLVHLKNFGHQPIALVGGATGMIGDPSGKSDERNLLNEETLAKNVAGIKSVLSRFLDFNSKEQNAPIMVNNYDWMKEFSFIDFAREVGKRITVNYMMAKDSVKKRINGEGEGMSFTEFTYQLIQGYDFYHLYKNNNCLLQMGGSDQWGNITTGTELVRRMGGENAKAFALTTPLITKADGSKFGKSEGGNVWLDADKTSVYKFYQFWVNATDADAEKYIKIFTFLDKETIDALIAEHQTAPHLRILQKKLAEEITIFVHSKEELEKAIQASNILFGNSTADDLKKLDEKTFLEVFDGVPQAEIAKADLENGLDIVTVLNEKTGFFKSNGEARRALTANSISVNREKIKEDFVLTANDLINNQFVLLQSGKKNYFVIRVV.

L-tyrosine is bound at residue tyrosine 33. Positions 38–47 (PTADSLHIGS) match the 'HIGH' region motif. L-tyrosine contacts are provided by tyrosine 172 and glutamine 176. Positions 234 to 238 (KFGKS) match the 'KMSKS' region motif. Lysine 237 is an ATP binding site. One can recognise an S4 RNA-binding domain in the interval 364–431 (LDIVTVLNEK…KKNYFVIRVV (68 aa)).

The protein belongs to the class-I aminoacyl-tRNA synthetase family. TyrS type 1 subfamily. As to quaternary structure, homodimer.

It localises to the cytoplasm. It carries out the reaction tRNA(Tyr) + L-tyrosine + ATP = L-tyrosyl-tRNA(Tyr) + AMP + diphosphate + H(+). Its function is as follows. Catalyzes the attachment of tyrosine to tRNA(Tyr) in a two-step reaction: tyrosine is first activated by ATP to form Tyr-AMP and then transferred to the acceptor end of tRNA(Tyr). The polypeptide is Tyrosine--tRNA ligase (Flavobacterium johnsoniae (strain ATCC 17061 / DSM 2064 / JCM 8514 / BCRC 14874 / CCUG 350202 / NBRC 14942 / NCIMB 11054 / UW101) (Cytophaga johnsonae)).